The sequence spans 558 residues: Asparagine--tRNA ligase, cytoplasmic (558 aa).

Residue serine 71 is modified to Phosphoserine. Positions 79–101 (MWHREQMKSESREKKEAEDSLRR) are disordered. Residues 81–101 (HREQMKSESREKKEAEDSLRR) are compositionally biased toward basic and acidic residues. 2 positions are modified to N6-acetyllysine: lysine 254 and lysine 500.

Belongs to the class-II aminoacyl-tRNA synthetase family. As to quaternary structure, homodimer.

It is found in the cytoplasm. The enzyme catalyses tRNA(Asn) + L-asparagine + ATP = L-asparaginyl-tRNA(Asn) + AMP + diphosphate + H(+). In terms of biological role, catalyzes the attachment of asparagine to tRNA(Asn) in a two-step reaction: asparagine is first activated by ATP to form Asn-AMP and then transferred to the acceptor end of tRNA(Asn). In addition to its essential role in protein synthesis, acts as a signaling molecule that induced migration of CCR3-expressing cells. Has an essential role in the development of the cerebral cortex, being required for proper proliferation of radial glial cells. This chain is Asparagine--tRNA ligase, cytoplasmic, found in Macaca fascicularis (Crab-eating macaque).